The following is a 172-amino-acid chain: Adenylate kinase isoenzyme 6 (172 aa).

Glycine 13, glycine 15, lysine 16, threonine 17, and threonine 18 together coordinate ATP. An NMPbind region spans residues 33-56 (NVGDLAREGQLYDGYDEEYGCPIL). Residues 108 to 118 (TRGYNEKKLQD) are LID. Arginine 109 is a binding site for ATP.

It belongs to the adenylate kinase family. AK6 subfamily. In terms of assembly, monomer and homodimer. Interacts with small ribosomal subunit protein uS11. Not a structural component of 43S pre-ribosomes, but transiently interacts with them by binding to uS11. Interacts with COIL (via C-terminus).

The protein localises to the cytoplasm. Its subcellular location is the nucleus. It localises to the nucleoplasm. The protein resides in the cajal body. It catalyses the reaction AMP + ATP = 2 ADP. The catalysed reaction is ATP + H2O = ADP + phosphate + H(+). In terms of biological role, broad-specificity nucleoside monophosphate (NMP) kinase that catalyzes the reversible transfer of the terminal phosphate group between nucleoside triphosphates and monophosphates. Also has ATPase activity. Involved in the late cytoplasmic maturation steps of the 40S ribosomal particles, specifically 18S rRNA maturation. While NMP activity is not required for ribosome maturation, ATPase activity is. Associates transiently with small ribosomal subunit protein uS11. ATP hydrolysis breaks the interaction with uS11. May temporarily remove uS11 from the ribosome to enable a conformational change of the ribosomal RNA that is needed for the final maturation step of the small ribosomal subunit. Its NMP activity may have a role in nuclear energy homeostasis. May be involved in regulation of Cajal body (CB) formation. The sequence is that of Adenylate kinase isoenzyme 6 from Mus musculus (Mouse).